Reading from the N-terminus, the 636-residue chain is 1-deoxy-D-xylulose-5-phosphate synthase (636 aa).

Residues His-72 and 113 to 115 (GHA) each bind thiamine diphosphate. Residue Asp-144 coordinates Mg(2+). Thiamine diphosphate is bound by residues 145 to 146 (GS), Asn-174, Tyr-287, and Glu-370. Asn-174 contributes to the Mg(2+) binding site.

The protein belongs to the transketolase family. DXPS subfamily. In terms of assembly, homodimer. Mg(2+) is required as a cofactor. Requires thiamine diphosphate as cofactor.

The enzyme catalyses D-glyceraldehyde 3-phosphate + pyruvate + H(+) = 1-deoxy-D-xylulose 5-phosphate + CO2. Its pathway is metabolic intermediate biosynthesis; 1-deoxy-D-xylulose 5-phosphate biosynthesis; 1-deoxy-D-xylulose 5-phosphate from D-glyceraldehyde 3-phosphate and pyruvate: step 1/1. Its function is as follows. Catalyzes the acyloin condensation reaction between C atoms 2 and 3 of pyruvate and glyceraldehyde 3-phosphate to yield 1-deoxy-D-xylulose-5-phosphate (DXP). The protein is 1-deoxy-D-xylulose-5-phosphate synthase of Synechococcus elongatus (strain ATCC 33912 / PCC 7942 / FACHB-805) (Anacystis nidulans R2).